A 176-amino-acid polypeptide reads, in one-letter code: Adenine phosphoribosyltransferase (176 aa).

The protein belongs to the purine/pyrimidine phosphoribosyltransferase family. Homodimer.

Its subcellular location is the cytoplasm. The catalysed reaction is AMP + diphosphate = 5-phospho-alpha-D-ribose 1-diphosphate + adenine. The protein operates within purine metabolism; AMP biosynthesis via salvage pathway; AMP from adenine: step 1/1. Functionally, catalyzes a salvage reaction resulting in the formation of AMP, that is energically less costly than de novo synthesis. This chain is Adenine phosphoribosyltransferase, found in Borrelia garinii subsp. bavariensis (strain ATCC BAA-2496 / DSM 23469 / PBi) (Borreliella bavariensis).